Reading from the N-terminus, the 351-residue chain is Transaldolase (351 aa).

Lys138 functions as the Schiff-base intermediate with substrate in the catalytic mechanism.

Belongs to the transaldolase family. Type 2 subfamily.

Its subcellular location is the cytoplasm. It catalyses the reaction D-sedoheptulose 7-phosphate + D-glyceraldehyde 3-phosphate = D-erythrose 4-phosphate + beta-D-fructose 6-phosphate. Its pathway is carbohydrate degradation; pentose phosphate pathway; D-glyceraldehyde 3-phosphate and beta-D-fructose 6-phosphate from D-ribose 5-phosphate and D-xylulose 5-phosphate (non-oxidative stage): step 2/3. Its function is as follows. Transaldolase is important for the balance of metabolites in the pentose-phosphate pathway. The protein is Transaldolase (tal) of Neisseria meningitidis serogroup A / serotype 4A (strain DSM 15465 / Z2491).